A 129-amino-acid chain; its full sequence is Large ribosomal subunit protein bL20 (129 aa).

This sequence belongs to the bacterial ribosomal protein bL20 family.

In terms of biological role, binds directly to 23S ribosomal RNA and is necessary for the in vitro assembly process of the 50S ribosomal subunit. It is not involved in the protein synthesizing functions of that subunit. The polypeptide is Large ribosomal subunit protein bL20 (Rhodococcus jostii (strain RHA1)).